The primary structure comprises 675 residues: Methionine--tRNA ligase (675 aa).

Residues 15-25 (PYANGSIHLGH) carry the 'HIGH' region motif. 4 residues coordinate Zn(2+): Cys-146, Cys-149, Cys-159, and Cys-162. Residues 332–336 (KMSKS) carry the 'KMSKS' region motif. An ATP-binding site is contributed by Lys-335. Residues 573–675 (DFAKVDMRIA…SGAQPGMQVK (103 aa)) enclose the tRNA-binding domain.

The protein belongs to the class-I aminoacyl-tRNA synthetase family. MetG type 1 subfamily. As to quaternary structure, homodimer. Requires Zn(2+) as cofactor.

The protein resides in the cytoplasm. The enzyme catalyses tRNA(Met) + L-methionine + ATP = L-methionyl-tRNA(Met) + AMP + diphosphate. Is required not only for elongation of protein synthesis but also for the initiation of all mRNA translation through initiator tRNA(fMet) aminoacylation. The sequence is that of Methionine--tRNA ligase from Serratia proteamaculans (strain 568).